Consider the following 151-residue polypeptide: Nucleoside diphosphate kinase (151 aa).

ATP contacts are provided by Lys11, Phe59, Arg87, Thr93, Arg104, and Asn114. The active-site Pros-phosphohistidine intermediate is the His117.

This sequence belongs to the NDK family. As to quaternary structure, homotetramer. It depends on Mg(2+) as a cofactor.

The protein resides in the cytoplasm. It carries out the reaction a 2'-deoxyribonucleoside 5'-diphosphate + ATP = a 2'-deoxyribonucleoside 5'-triphosphate + ADP. The catalysed reaction is a ribonucleoside 5'-diphosphate + ATP = a ribonucleoside 5'-triphosphate + ADP. Functionally, major role in the synthesis of nucleoside triphosphates other than ATP. The ATP gamma phosphate is transferred to the NDP beta phosphate via a ping-pong mechanism, using a phosphorylated active-site intermediate. The polypeptide is Nucleoside diphosphate kinase (Prochlorococcus marinus (strain SARG / CCMP1375 / SS120)).